The chain runs to 211 residues: Phosphoglycerate mutase (211 aa).

Substrate-binding positions include 14–21 (RHGESEWN) and 27–28 (TG). Catalysis depends on H15, which acts as the Tele-phosphohistidine intermediate. T37 is subject to Phosphothreonine. The residue at position 62 (S62) is a Phosphoserine. Substrate contacts are provided by residues R66, 93 to 96 (ERYY), K104, 120 to 121 (RR), and 164 to 165 (GN). Residue E93 is the Proton donor/acceptor of the active site. Y96 carries the phosphotyrosine modification. S166 carries the post-translational modification Phosphoserine.

The protein belongs to the phosphoglycerate mutase family. BPG-dependent PGAM subfamily. Monomer. The N-terminus is blocked.

The catalysed reaction is (2R)-2-phosphoglycerate = (2R)-3-phosphoglycerate. It functions in the pathway carbohydrate degradation; glycolysis; pyruvate from D-glyceraldehyde 3-phosphate: step 3/5. This Schizosaccharomyces pombe (strain 972 / ATCC 24843) (Fission yeast) protein is Phosphoglycerate mutase (gpm1).